A 595-amino-acid polypeptide reads, in one-letter code: Pectinesterase 5 (595 aa).

The N-terminal stretch at 1–24 is a signal peptide; it reads MIGKVVVSVASILLIVGVAIGVVA. Asn-86 and Asn-206 each carry an N-linked (GlcNAc...) asparagine glycan. Residues 215 to 239 form a disordered region; the sequence is SDKGAAPVNKGTPPVADDSPVADPD. Residues 227 to 239 are compositionally biased toward low complexity; sequence PPVADDSPVADPD. The RRLL cleavage motif signature appears at 243 to 246; that stretch reads RRLL. Positions 263-266 match the RKLM cleavage motif motif; that stretch reads RKLM. A glycan (N-linked (GlcNAc...) asparagine) is linked at Asn-349. Substrate-binding residues include Thr-360 and Gln-390. Asp-413 acts as the Proton donor in catalysis. Asp-434 serves as the catalytic Nucleophile. Residues Arg-503 and Trp-505 each coordinate substrate.

This sequence in the N-terminal section; belongs to the PMEI family. In the C-terminal section; belongs to the pectinesterase family. As to quaternary structure, interacts with SBT6.1. As to expression, expressed in pollen grains and pollen tubes.

Its subcellular location is the cell membrane. It is found in the secreted. The protein localises to the cell wall. It localises to the golgi apparatus membrane. The catalysed reaction is [(1-&gt;4)-alpha-D-galacturonosyl methyl ester](n) + n H2O = [(1-&gt;4)-alpha-D-galacturonosyl](n) + n methanol + n H(+). The protein operates within glycan metabolism; pectin degradation; 2-dehydro-3-deoxy-D-gluconate from pectin: step 1/5. Functionally, acts in the modification of cell walls via demethylesterification of cell wall pectin. Plays an important role in growth of pollen tubes in female floral tissues, possibly via enhancing the interaction between the pollen tube and female floral tissues by modification of the cell walls. May be regulated by MYB80 during anther development and play a role in tapetum and pollen development. This Arabidopsis thaliana (Mouse-ear cress) protein is Pectinesterase 5 (PME5).